Here is a 216-residue protein sequence, read N- to C-terminus: MSLPMLQVALDNQTMDSAYETTRLIAEEVDIIEVGTILCVGEGVRAVRDLKALYPHKIVLADAKIADAGKILSRMCFEANADWVTVICCADINTAKGALDVAKEFNGDVQIELTGYWTWEQAQQWRDAGIGQVVYHRSRDAQAAGVAWGGADITAIKRLSDMGFKVTVTGGLALEDLPLFKGIPIHVFIAGRSIRDAASPVEAARQFKRSIAELWG.

Asp-11 is a substrate binding site. Residues Glu-33 and Asp-62 each contribute to the Mg(2+) site. Arg-192 is a binding site for substrate.

This sequence belongs to the HPS/KGPDC family. KGPDC subfamily. As to quaternary structure, homodimer. The cofactor is Mg(2+).

The catalysed reaction is 3-dehydro-L-gulonate 6-phosphate + H(+) = L-xylulose 5-phosphate + CO2. Its pathway is cofactor degradation; L-ascorbate degradation; D-xylulose 5-phosphate from L-ascorbate: step 2/4. Functionally, catalyzes the decarboxylation of 3-keto-L-gulonate-6-P into L-xylulose-5-P. Is involved in the anaerobic L-ascorbate utilization. In Shigella dysenteriae serotype 1 (strain Sd197), this protein is 3-keto-L-gulonate-6-phosphate decarboxylase UlaD.